Here is a 188-residue protein sequence, read N- to C-terminus: Large ribosomal subunit protein eL18 (188 aa).

Positions 153–188 (GKAPGTPHSHTKPYVRSKGRKFERARGRRASCGYKN) are disordered. Residues 161–171 (SHTKPYVRSKG) are compositionally biased toward basic residues.

It belongs to the eukaryotic ribosomal protein eL18 family. In terms of assembly, component of the large ribosomal subunit.

It is found in the cytoplasm. It localises to the cytosol. The protein localises to the rough endoplasmic reticulum. Functionally, component of the large ribosomal subunit. The ribosome is a large ribonucleoprotein complex responsible for the synthesis of proteins in the cell. The protein is Large ribosomal subunit protein eL18 (rpl18) of Oreochromis mossambicus (Mozambique tilapia).